The following is a 309-amino-acid chain: Methionyl-tRNA formyltransferase (309 aa).

A (6S)-5,6,7,8-tetrahydrofolate-binding site is contributed by 112-115; sequence SLLP.

The protein belongs to the Fmt family.

The enzyme catalyses L-methionyl-tRNA(fMet) + (6R)-10-formyltetrahydrofolate = N-formyl-L-methionyl-tRNA(fMet) + (6S)-5,6,7,8-tetrahydrofolate + H(+). Attaches a formyl group to the free amino group of methionyl-tRNA(fMet). The formyl group appears to play a dual role in the initiator identity of N-formylmethionyl-tRNA by promoting its recognition by IF2 and preventing the misappropriation of this tRNA by the elongation apparatus. The sequence is that of Methionyl-tRNA formyltransferase from Bartonella quintana (strain Toulouse) (Rochalimaea quintana).